The primary structure comprises 776 residues: A-type ATP synthase subunit A (776 aa).

This sequence belongs to the ATPase alpha/beta chains family. In terms of assembly, has multiple subunits with at least A(3), B(3), C, D, E, F, H, I and proteolipid K(x). This protein undergoes a protein self splicing that involves a post-translational excision of the VDE intervening region (intein) followed by peptide ligation.

Its subcellular location is the cell membrane. It catalyses the reaction ATP + H2O + 4 H(+)(in) = ADP + phosphate + 5 H(+)(out). In terms of biological role, component of the A-type ATP synthase that produces ATP from ADP in the presence of a proton gradient across the membrane. The A chain is the catalytic subunit. This is A-type ATP synthase subunit A from Thermoplasma volcanium (strain ATCC 51530 / DSM 4299 / JCM 9571 / NBRC 15438 / GSS1).